We begin with the raw amino-acid sequence, 81 residues long: Acyl carrier protein (81 aa).

The 76-residue stretch at 4–79 (SEILEKVKAI…DVLDFINNKV (76 aa)) folds into the Carrier domain. Ser-39 carries the O-(pantetheine 4'-phosphoryl)serine modification.

The protein belongs to the acyl carrier protein (ACP) family. Post-translationally, 4'-phosphopantetheine is transferred from CoA to a specific serine of apo-ACP by AcpS. This modification is essential for activity because fatty acids are bound in thioester linkage to the sulfhydryl of the prosthetic group.

Its subcellular location is the cytoplasm. The protein operates within lipid metabolism; fatty acid biosynthesis. In terms of biological role, carrier of the growing fatty acid chain in fatty acid biosynthesis. This chain is Acyl carrier protein, found in Thermosynechococcus vestitus (strain NIES-2133 / IAM M-273 / BP-1).